Here is a 526-residue protein sequence, read N- to C-terminus: Cholesterol side-chain cleavage enzyme, mitochondrial (526 aa).

The N-terminal 36 residues, 1 to 36 (MLAKGLCLRSVLVKSCQPFLSPVWQGPGLATGNGAG), are a transit peptide targeting the mitochondrion. Heme is bound at residue cysteine 459.

This sequence belongs to the cytochrome P450 family. As to quaternary structure, interacts with FDX1/adrenodoxin. The cofactor is heme. As to expression, expressed in the kidney where it localizes to the distal convoluted tubule and the thick ascending limb of the loop of Henle (at protein level). In the ovary, highly expressed in interstitial cells (at protein level). Also expressed in adrenal gland and testis.

Its subcellular location is the mitochondrion inner membrane. It catalyses the reaction 6 reduced [adrenodoxin] + cholesterol + 3 O2 + 6 H(+) = 4-methylpentanal + pregnenolone + 6 oxidized [adrenodoxin] + 4 H2O. It carries out the reaction 2 reduced [adrenodoxin] + cholesterol + O2 + 2 H(+) = (22R)-hydroxycholesterol + 2 oxidized [adrenodoxin] + H2O. The catalysed reaction is (22R)-hydroxycholesterol + 2 reduced [adrenodoxin] + O2 + 2 H(+) = (20R,22R)-20,22-dihydroxycholesterol + 2 oxidized [adrenodoxin] + H2O. The enzyme catalyses (20R,22R)-20,22-dihydroxycholesterol + 2 reduced [adrenodoxin] + O2 + 2 H(+) = 4-methylpentanal + pregnenolone + 2 oxidized [adrenodoxin] + 2 H2O. It participates in lipid metabolism; C21-steroid hormone metabolism. Its pathway is steroid metabolism; cholesterol metabolism. A cytochrome P450 monooxygenase that catalyzes the side-chain hydroxylation and cleavage of cholesterol to pregnenolone, the precursor of most steroid hormones. Catalyzes three sequential oxidation reactions of cholesterol, namely the hydroxylation at C22 followed with the hydroxylation at C20 to yield 20R,22R-hydroxycholesterol that is further cleaved between C20 and C22 to yield the C21-steroid pregnenolone and 4-methylpentanal. Mechanistically, uses molecular oxygen inserting one oxygen atom into a substrate and reducing the second into a water molecule. Two electrons are provided by NADPH via a two-protein mitochondrial transfer system comprising flavoprotein FDXR (adrenodoxin/ferredoxin reductase) and nonheme iron-sulfur protein FDX1 or FDX2 (adrenodoxin/ferredoxin). This chain is Cholesterol side-chain cleavage enzyme, mitochondrial, found in Rattus norvegicus (Rat).